The sequence spans 522 residues: Sulfite reductase [NADPH] flavoprotein alpha-component (522 aa).

The region spanning 60–198 (ITILFGSQTG…DTERWSSDAL (139 aa)) is the Flavodoxin-like domain. The segment at 217 to 242 (TLRSHQDLRSHQEQSRNRARPYDKDN) is disordered. Positions 220–242 (SHQDLRSHQEQSRNRARPYDKDN) are enriched in basic and acidic residues. Residues 241–399 (DNPYTATLLE…VAPYRAFLQQ (159 aa)) form the FAD-binding FR-type domain.

As to quaternary structure, alpha(8)-beta(8). The alpha component is a flavoprotein, the beta component is a hemoprotein. Requires FAD as cofactor. It depends on FMN as a cofactor.

It catalyses the reaction hydrogen sulfide + 3 NADP(+) + 3 H2O = sulfite + 3 NADPH + 4 H(+). Its function is as follows. Catalyzes the 6-electron reduction of sulfite to sulfide. This is one of several activities required for the biosynthesis of L-cysteine from sulfate. The flavo-protein component catalyzes the electron flow from NADPH -&gt; FAD -&gt; FMN to the hemoprotein component. The polypeptide is Sulfite reductase [NADPH] flavoprotein alpha-component (cysJ) (Thiocapsa roseopersicina).